The following is a 161-amino-acid chain: uncharacterized protein (161 aa).

The protein belongs to the M.jannaschii MJ0150/MJ0739/MJ0745/MJ1460/MJ1642 family.

This is an uncharacterized protein from Methanocaldococcus jannaschii (strain ATCC 43067 / DSM 2661 / JAL-1 / JCM 10045 / NBRC 100440) (Methanococcus jannaschii).